The primary structure comprises 937 residues: Beta-mannosidase A (937 aa).

Positions 1–23 are cleaved as a signal peptide; sequence MRALPTTATTLLGVLFFPSASRS. 7 N-linked (GlcNAc...) asparagine glycosylation sites follow: Asn-42, Asn-82, Asn-250, Asn-285, Asn-319, Asn-329, and Asn-350. Glu-482 (proton donor) is an active-site residue. N-linked (GlcNAc...) asparagine glycans are attached at residues Asn-553, Asn-612, Asn-743, and Asn-796.

This sequence belongs to the glycosyl hydrolase 2 family. Beta-mannosidase A subfamily. In terms of assembly, homodimer. In terms of processing, N-glycosylated.

It localises to the secreted. It catalyses the reaction Hydrolysis of terminal, non-reducing beta-D-mannose residues in beta-D-mannosides.. It participates in glycan metabolism; N-glycan degradation. Exoglycosidase that cleaves the single beta-linked mannose residue from the non-reducing end of beta-mannosidic oligosaccharides of various complexity and length. Involved in the degradation of polymeric mannan and galactomannan. Releases the terminal mannose residue from mannotriose and is somewaht less active on other mannooligosaccharides. The sequence is that of Beta-mannosidase A (mndA) from Aspergillus aculeatus.